We begin with the raw amino-acid sequence, 521 residues long: Bacillolysin (521 aa).

Residues 1 to 27 (MGLGKKLSVAVAASFMSLTISLPGVQA) form the signal peptide. The propeptide at 28–221 (AENPQLKENL…ILKKQNKVEH (194 aa)) is activation peptide. Residues glutamine 283 and aspartate 360 each contribute to the Ca(2+) site. Histidine 364 contributes to the Zn(2+) binding site. Residue glutamate 365 is part of the active site. Zn(2+)-binding residues include histidine 368 and glutamate 388. Ca(2+)-binding residues include aspartate 399, aspartate 402, aspartate 404, glutamate 407, and valine 411. The active-site Proton donor is histidine 449.

The protein belongs to the peptidase M4 family. Ca(2+) serves as cofactor. Requires Zn(2+) as cofactor.

The protein localises to the secreted. It catalyses the reaction Similar, but not identical, to that of thermolysin.. In terms of biological role, extracellular zinc metalloprotease. The chain is Bacillolysin (npr) from Bacillus amyloliquefaciens (Bacillus velezensis).